The following is a 308-amino-acid chain: Eukaryotic translation initiation factor 3 subunit G-A (308 aa).

2 disordered regions span residues 1–35 (MPTG…KPDP) and 177–226 (TGDK…ADDN). Residues 185–194 (GAEPEPAQAP) show a composition bias toward low complexity. A compositionally biased stretch (basic and acidic residues) spans 209-226 (GGSRRGESMQPNRRADDN). The 79-residue stretch at 227–305 (ATIRVTNLSE…LILNVEWAKP (79 aa)) folds into the RRM domain.

The protein belongs to the eIF-3 subunit G family. Component of the eukaryotic translation initiation factor 3 (eIF-3) complex, which is composed of 13 subunits: eif3a, eif3b, eif3c, eif3d, eif3e, eif3f, eif3g, eif3h, eif3i, eif3j, eif3k, eif3l and eif3m.

The protein resides in the cytoplasm. In terms of biological role, RNA-binding component of the eukaryotic translation initiation factor 3 (eIF-3) complex, which is involved in protein synthesis of a specialized repertoire of mRNAs and, together with other initiation factors, stimulates binding of mRNA and methionyl-tRNAi to the 40S ribosome. The eIF-3 complex specifically targets and initiates translation of a subset of mRNAs involved in cell proliferation. This subunit can bind 18S rRNA. The sequence is that of Eukaryotic translation initiation factor 3 subunit G-A (eif3g-a) from Xenopus laevis (African clawed frog).